The primary structure comprises 81 residues: uncharacterized protein (81 aa).

This is an uncharacterized protein from Sulfolobus islandicus rod-shaped virus 1 (SIRV-1).